The following is a 1089-amino-acid chain: Pentatricopeptide repeat-containing protein MRL1, chloroplastic (1089 aa).

Residues 1–72 constitute a chloroplast transit peptide; it reads MEVTSTTFIS…SIRSPRLVVR (72 aa). PPR repeat units follow at residues 466–500, 501–535, 536–570, 571–605, 608–642, 643–677, 678–712, 713–747, 748–782, and 783–817; these read TMST…GMTA, DCKL…GVEA, NLHT…NVKP, DRVV…THPI, DHIS…GIRG, TPEV…DVTP, DEVF…GIRL, GTIS…KLRP, TIST…GLKP, and NTIT…GVSP.

The protein belongs to the PPR family. P subfamily. Expressed in stems, leaves and sepals.

It localises to the plastid. The protein resides in the chloroplast. In terms of biological role, regulator of the large subunit (LS) of RuBisCO. Involved either in the processing or in the stabilization of the processed transcript, probably by acting as a barrier to the 5'&gt;3' degradation. This Arabidopsis thaliana (Mouse-ear cress) protein is Pentatricopeptide repeat-containing protein MRL1, chloroplastic (MRL1).